Here is a 104-residue protein sequence, read N- to C-terminus: MSSIRKTYVLKLYVAGNTPNSVRALRTLNHILETEFQGVYALKVIDVLKNPQLAEEDKILATPTLAKVLPPPVRKIIGDLSDRERVLIGLDLLYEELSDGIMEY.

Belongs to the KaiB family. The KaiABC complex composition changes during the circadian cycle to control KaiC phosphorylation. Complexes KaiC(6), KaiA(2-4):KaiC(6), KaiB(6):KaiC(6) and KaiC(6):KaiB(6):KaiA(12) are among the most important forms, many form cooperatively. Undergoes a major conformational rearrangment; in the free state forms homotetramers as a dimer of dimers. When bound to the CI domain of KaiC switches to a monomeric thioredoxin-fold (KaiB(fs)). KaiB(fs) binds CikA, leading it to dephosphorylate phospho-RpaA.

Key component of the KaiABC oscillator complex, which constitutes the main circadian regulator in cyanobacteria. Complex composition changes during the circadian cycle to control KaiC phosphorylation. KaiA stimulates KaiC autophosphorylation, while KaiB sequesters KaiA, leading to KaiC autodephosphorylation. Phospho-Ser-431 KaiC accumulation triggers binding of KaiB to form the KaiB(6):KaiC(6) complex, leading to changes in output regulators CikA and SasA. KaiB switches to a thioredoxin-like fold (KaiB(fs)) when bound to KaiC. KaiB(6):KaiC(6) formation exposes a site for KaiA binding that sequesters KaiA from KaiC, making the KaiC(6):KaiB(6):KaiA(12) complex that results in KaiC autodephosphorylation. In terms of biological role, a metamorphic protein which reversibly switches between an inactive tetrameric fold and a rare, thioredoxin-like monomeric fold (KaiB(fs)). KaiB(fs) binds phospho-KaiC, KaiA and CikA. KaiA and CikA compete for binding to KaiB(fs), and KaiB(fs) and SasA compete for binding to KaiC, thus the clock oscillator and output signal pathway are tightly coupled. The polypeptide is Circadian clock oscillator protein KaiB (Acaryochloris marina (strain MBIC 11017)).